The primary structure comprises 414 residues: Probable aminotransferase TAT2 (414 aa).

The protein belongs to the class-I pyridoxal-phosphate-dependent aminotransferase family. The cofactor is pyridoxal 5'-phosphate.

The protein is Probable aminotransferase TAT2 of Arabidopsis thaliana (Mouse-ear cress).